A 578-amino-acid chain; its full sequence is Triokinase/FMN cyclase (578 aa).

Positions 9–336 constitute a DhaK domain; that stretch reads SVEGCADDAL…IDAETTAKAW (328 aa). Dihydroxyacetone is bound by residues 56-59, Lys109, and Asp114; that span reads GSGH. His221 acts as the Tele-hemiaminal-histidine intermediate in catalysis. In terms of domain architecture, DhaL spans 372–571; the sequence is KQMALVLDRI…AAAIFRAILE (200 aa). ATP contacts are provided by residues 401-404, 446-447, Gly486, and 494-495; these read DGDC, SS, and TM. Residues Ser511 and Ser545 each carry the phosphoserine modification. 556–558 is an ATP binding site; that stretch reads DPG.

This sequence belongs to the dihydroxyacetone kinase (DAK) family. In terms of assembly, homodimer. Interacts with IFIH1 (via the CARD domains), the interaction is inhibited by viral infection. Mg(2+) is required as a cofactor. It depends on Mn(2+) as a cofactor. The cofactor is Co(2+).

The catalysed reaction is dihydroxyacetone + ATP = dihydroxyacetone phosphate + ADP + H(+). It carries out the reaction D-glyceraldehyde + ATP = D-glyceraldehyde 3-phosphate + ADP + H(+). The enzyme catalyses FAD = riboflavin cyclic-4',5'-phosphate + AMP + H(+). With respect to regulation, each activity is inhibited by the substrate(s) of the other. Catalyzes both the phosphorylation of dihydroxyacetone and of glyceraldehyde, and the splitting of ribonucleoside diphosphate-X compounds among which FAD is the best substrate. Represses IFIH1-mediated cellular antiviral response. This chain is Triokinase/FMN cyclase, found in Mus musculus (Mouse).